The primary structure comprises 524 residues: Probable pectinesterase/pectinesterase inhibitor 19 (524 aa).

A signal peptide spans 1–22; sequence MLVKVFSFFILMITMVVIGVSK. The interval 23–172 is pectinesterase inhibitor 19; that stretch reads EYCDDKQSCQ…ISRARIALAL (150 aa). Residues 215–510 form a pectinesterase 19 region; sequence DVVVAKDGTG…FTVAKLLDGE (296 aa). 2 N-linked (GlcNAc...) asparagine glycosylation sites follow: Asn-265 and Asn-281. Thr-290 is a substrate binding site. Asp-343 acts as the Proton donor; for pectinesterase activity in catalysis. Cys-357 and Cys-377 are disulfide-bonded. Catalysis depends on Asp-364, which acts as the Nucleophile; for pectinesterase activity. The N-linked (GlcNAc...) asparagine glycan is linked to Asn-412. Arg-430 and Trp-432 together coordinate substrate.

This sequence in the N-terminal section; belongs to the PMEI family. The protein in the C-terminal section; belongs to the pectinesterase family. Expressed in siliques, but not in flower buds.

The protein resides in the secreted. It is found in the cell wall. The catalysed reaction is [(1-&gt;4)-alpha-D-galacturonosyl methyl ester](n) + n H2O = [(1-&gt;4)-alpha-D-galacturonosyl](n) + n methanol + n H(+). It participates in glycan metabolism; pectin degradation; 2-dehydro-3-deoxy-D-gluconate from pectin: step 1/5. Its function is as follows. Acts in the modification of cell walls via demethylesterification of cell wall pectin. This Arabidopsis thaliana (Mouse-ear cress) protein is Probable pectinesterase/pectinesterase inhibitor 19 (PME19).